A 366-amino-acid polypeptide reads, in one-letter code: Fructose-bisphosphate aldolase 2 (366 aa).

Arg-60 and Lys-150 together coordinate substrate. Catalysis depends on Glu-191, which acts as the Proton acceptor. Lys-233 functions as the Schiff-base intermediate with dihydroxyacetone-P in the catalytic mechanism.

The protein belongs to the class I fructose-bisphosphate aldolase family.

It carries out the reaction beta-D-fructose 1,6-bisphosphate = D-glyceraldehyde 3-phosphate + dihydroxyacetone phosphate. It participates in carbohydrate degradation; glycolysis; D-glyceraldehyde 3-phosphate and glycerone phosphate from D-glucose: step 4/4. In Caenorhabditis elegans, this protein is Fructose-bisphosphate aldolase 2 (aldo-2).